The following is a 518-amino-acid chain: Probable triacylglyceride transporter BCG_1471c (518 aa).

14 consecutive transmembrane segments (helical) span residues 7–27 (VAISAGSLAVLLGALDTYVVV), 46–66 (RITWIVTMYLLGYIAAMPLLG), 76–96 (LMLQVSLAGFIIGSVVTALAG), 110–130 (IQGVASGALLPITLALGADLW), 144–164 (AAQELGSVLGPLYGIFIVWLL), 170–190 (VFWINVPLTAIAMVMIHFSLP), 201–221 (VDLVGGLLLALALGLAVIGLY), 230–250 (VLPDYGAPLLVGALVAAVAFF), 270–290 (PFLSALGASVAAGAALMVTLV), 308–328 (AGMLLWFLIALPIGAVTGGWI), 337–357 (VAFAGLLIAAYGYWLISHWPV), 379–401 (LVVAGLGLGLVIGPLSSATLRVV), 408–428 (IASAAVVVARMTGMLIGVAAL), and 475–495 (IFTITAIVCVFGAVLGLLISG).

It belongs to the major facilitator superfamily.

It is found in the cell inner membrane. Its activity is regulated as follows. Inhibited by CCCP and valinomycin. Its function is as follows. In association with lipoprotein LprG probably transports triacylglycerides (TAG) across the inner cell membrane into the periplasm; TAG probably regulates lipid metabolism and growth regulation. Confers resistance to several drugs such as rifampicin, clofazimine and novobiocin; is also part of the oxidative stress response and is needed to maintain normal growth characteristics. Probably an efflux transporter, involved in maintaining correct cell wall permeability. Probably required with LprG for normal surface localization of lipoarabinomannan (LAM). Required for optimal growth on cholesterol. This chain is Probable triacylglyceride transporter BCG_1471c, found in Mycobacterium bovis (strain BCG / Pasteur 1173P2).